A 389-amino-acid chain; its full sequence is Teichoic acid glycerol-phosphate transferase (389 aa).

It belongs to the CDP-glycerol glycerophosphotransferase family.

The protein resides in the cell membrane. It carries out the reaction 4-O-[(2R)-glycerylphospho]-N-acetyl-beta-D-mannosaminyl-(1-&gt;4)-N-acetyl-alpha-D-glucosaminyl di-trans,octa-cis-undecaprenyl diphosphate + CDP-glycerol = 4-O-[di(2R)-glycerylphospho]-N-acetyl-beta-D-mannosaminyl-(1-&gt;4)-N-acetyl-alpha-D-glucosaminyl di-trans,octa-cis-undecaprenyl diphosphate + CMP + H(+). The protein operates within cell wall biogenesis; poly(ribitol phosphate) teichoic acid biosynthesis. Its function is as follows. Catalyzes the addition of a second glycerol phosphate unit from CDP-glycerol to the prenolpyrophosphate-linked disaccharide, to complete the linkage unit. This chain is Teichoic acid glycerol-phosphate transferase (tarF), found in Staphylococcus aureus (strain NCTC 8325 / PS 47).